The chain runs to 236 residues: Phosphoribosylaminoimidazole-succinocarboxamide synthase (236 aa).

This sequence belongs to the SAICAR synthetase family.

The catalysed reaction is 5-amino-1-(5-phospho-D-ribosyl)imidazole-4-carboxylate + L-aspartate + ATP = (2S)-2-[5-amino-1-(5-phospho-beta-D-ribosyl)imidazole-4-carboxamido]succinate + ADP + phosphate + 2 H(+). The protein operates within purine metabolism; IMP biosynthesis via de novo pathway; 5-amino-1-(5-phospho-D-ribosyl)imidazole-4-carboxamide from 5-amino-1-(5-phospho-D-ribosyl)imidazole-4-carboxylate: step 1/2. The protein is Phosphoribosylaminoimidazole-succinocarboxamide synthase of Campylobacter curvus (strain 525.92).